A 487-amino-acid chain; its full sequence is 6-phosphogluconate dehydrogenase, decarboxylating 1, chloroplastic (487 aa).

Met1 bears the N-acetylmethionine mark. NADP(+)-binding positions include 13 to 18 (GLAVMG), 36 to 38 (NRT), 80 to 82 (VKA), and Asn108. Substrate contacts are provided by residues Asn108 and 134 to 136 (SGG). Residue Lys188 is the Proton acceptor of the active site. 191–192 (HN) provides a ligand contact to substrate. Residue Glu195 is the Proton donor of the active site. Substrate contacts are provided by Tyr196, Lys266, Arg293, Arg458, and His464.

Belongs to the 6-phosphogluconate dehydrogenase family. As to quaternary structure, forms homodimer. Forms heterodimers with PGD2 or PGD3.

Its subcellular location is the plastid. It localises to the chloroplast. The protein localises to the cytoplasm. It is found in the cytosol. It carries out the reaction 6-phospho-D-gluconate + NADP(+) = D-ribulose 5-phosphate + CO2 + NADPH. It functions in the pathway carbohydrate degradation; pentose phosphate pathway; D-ribulose 5-phosphate from D-glucose 6-phosphate (oxidative stage): step 3/3. Catalyzes the oxidative decarboxylation of 6-phosphogluconate to ribulose 5-phosphate and CO(2), with concomitant reduction of NADP to NADPH. The chain is 6-phosphogluconate dehydrogenase, decarboxylating 1, chloroplastic from Arabidopsis thaliana (Mouse-ear cress).